A 270-amino-acid chain; its full sequence is Vegetative storage protein 1 (270 aa).

Residues 1 to 17 (MKILSLSLLLLLAATVS) form the signal peptide. N-linked (GlcNAc...) asparagine glycosylation is found at Asn115 and Asn215.

This sequence belongs to the APS1/VSP family. As to expression, expressed in leaves and in gynoecia, especially in styles, the basal and distal ends of ovaries and in siliques.

May function as somatic storage protein during early seedling development. This chain is Vegetative storage protein 1 (VSP1), found in Arabidopsis thaliana (Mouse-ear cress).